We begin with the raw amino-acid sequence, 558 residues long: 2-isopropylmalate synthase (558 aa).

Residues 31–305 (PRWCSTDLRD…YPNLDFSDMR (275 aa)) form the Pyruvate carboxyltransferase domain. Residues aspartate 40, histidine 244, histidine 246, and asparagine 280 each contribute to the Mg(2+) site. A regulatory domain region spans residues 439 to 558 (NPDDKGQMKL…NACHPLYKEA (120 aa)).

The protein belongs to the alpha-IPM synthase/homocitrate synthase family. LeuA type 2 subfamily. Homodimer. Requires Mg(2+) as cofactor.

Its subcellular location is the cytoplasm. The catalysed reaction is 3-methyl-2-oxobutanoate + acetyl-CoA + H2O = (2S)-2-isopropylmalate + CoA + H(+). The protein operates within amino-acid biosynthesis; L-leucine biosynthesis; L-leucine from 3-methyl-2-oxobutanoate: step 1/4. Its function is as follows. Catalyzes the condensation of the acetyl group of acetyl-CoA with 3-methyl-2-oxobutanoate (2-ketoisovalerate) to form 3-carboxy-3-hydroxy-4-methylpentanoate (2-isopropylmalate). The sequence is that of 2-isopropylmalate synthase from Marinomonas sp. (strain MWYL1).